Reading from the N-terminus, the 1005-residue chain is Beta-galactosidase (1005 aa).

Glutamate 455 serves as the catalytic Proton donor. Glutamate 526 (nucleophile) is an active-site residue.

The protein belongs to the glycosyl hydrolase 2 family.

The catalysed reaction is Hydrolysis of terminal non-reducing beta-D-galactose residues in beta-D-galactosides.. The protein is Beta-galactosidase (lacZ) of Actinobacillus pleuropneumoniae (Haemophilus pleuropneumoniae).